An 84-amino-acid chain; its full sequence is Small ribosomal subunit protein bS20 (84 aa).

It belongs to the bacterial ribosomal protein bS20 family.

In terms of biological role, binds directly to 16S ribosomal RNA. This is Small ribosomal subunit protein bS20 from Limosilactobacillus reuteri (strain DSM 20016) (Lactobacillus reuteri).